The following is a 357-amino-acid chain: Glucose-6-phosphatase catalytic subunit 1 (357 aa).

The Lumenal portion of the chain corresponds to 1 to 28 (MEERMNVLHDFGIQSTRYLQVNYEDSQD). The helical transmembrane segment at 29–49 (WFVLVSVIADLRNAFYVLFPI) threads the bilayer. The Cytoplasmic segment spans residues 50–60 (WFHIQETVGIN). A helical membrane pass occupies residues 61–81 (LLWVAVVGDWFNLVFKWILFG). The Lumenal portion of the chain corresponds to 82 to 117 (QRPYWWVLDTDYYSNSSVPLIKQFPVTCETGPGSPS). Arginine 83 serves as a coordination point for substrate. An N-linked (GlcNAc...) asparagine glycan is attached at asparagine 96. The helical transmembrane segment at 118-138 (GHAMGTAGVYYVMVTSTLAIF) threads the bilayer. Histidine 119 serves as the catalytic Proton donor. Residues 139–147 (RGKKKSTYG) lie on the Cytoplasmic side of the membrane. The chain crosses the membrane as a helical span at residues 148–168 (FRCLNVVLWLGYWAVQLNVCL). The Lumenal portion of the chain corresponds to 169–170 (SR). Arginine 170 provides a ligand contact to substrate. Residues 171–191 (IYLAAHFPHQVVAGVLSGIAV) form a helical membrane-spanning segment. Histidine 176 acts as the Nucleophile in catalysis. Residues 192-211 (AETFSHIRGIYNASLQRYCL) are Cytoplasmic-facing. A helical transmembrane segment spans residues 212-232 (ITFFLFGFALGFYLLLKGLGV). The Lumenal portion of the chain corresponds to 233–254 (DLLWTLEKAKRWCERPEWVHLD). Residues 255 to 275 (TTPFASLFKNLGTLLGLGLAL) traverse the membrane as a helical segment. Residues 276 to 291 (NSSMYRKSCKGELRKS) are Cytoplasmic-facing. The helical transmembrane segment at 292 to 312 (LPFRLACIVASLGLLHLFDSL) threads the bilayer. Residues 313–320 (KPPSQIES) are Lumenal-facing. A helical membrane pass occupies residues 321–341 (IFYILSFCKSATVPFASVSLI). Residues 342-357 (PYCLARLLGQTHKKSL) are Cytoplasmic-facing. The Prevents secretion from ER signature appears at 354–357 (KKSL).

The protein belongs to the glucose-6-phosphatase family.

Its subcellular location is the endoplasmic reticulum membrane. It catalyses the reaction D-glucose 6-phosphate + H2O = D-glucose + phosphate. It functions in the pathway carbohydrate biosynthesis; gluconeogenesis. Functionally, hydrolyzes glucose-6-phosphate to glucose in the endoplasmic reticulum. Forms with the glucose-6-phosphate transporter (SLC37A4/G6PT) the complex responsible for glucose production in the terminal step of glycogenolysis and gluconeogenesis. Hence, it is the key enzyme in homeostatic regulation of blood glucose levels. The sequence is that of Glucose-6-phosphatase catalytic subunit 1 (G6pc1) from Rattus norvegicus (Rat).